Reading from the N-terminus, the 415-residue chain is Peptide chain release factor subunit 1 (415 aa).

This sequence belongs to the eukaryotic release factor 1 family. Heterodimer of two subunits, one of which binds GTP.

The protein localises to the cytoplasm. Directs the termination of nascent peptide synthesis (translation) in response to the termination codons UAA, UAG and UGA. This Methanosarcina mazei (strain ATCC BAA-159 / DSM 3647 / Goe1 / Go1 / JCM 11833 / OCM 88) (Methanosarcina frisia) protein is Peptide chain release factor subunit 1.